Here is a 553-residue protein sequence, read N- to C-terminus: Threonylcarbamoyladenosine tRNA methylthiotransferase (553 aa).

The segment at 21–61 (SAEDVKPQERYQNKKSVTVRAKKRVQIKPETDAEEKPTPRP) is disordered. Composition is skewed to basic and acidic residues over residues 23–32 (EDVKPQERYQ) and 47–58 (IKPETDAEEKPT). An MTTase N-terminal domain is found at 72 to 179 (QKVFVKTWGC…VVEVVEETLK (108 aa)). Residues Cys81, Cys116, Cys145, Cys221, Cys225, and Cys228 each coordinate [4Fe-4S] cluster. Residues 207–438 (RKNPLIEIIS…DLFYSYEPYA (232 aa)) form the Radical SAM core domain. The TRAM domain maps to 438–500 (AQRVGEMYTV…KFSMVGEILD (63 aa)). Residues 533 to 553 (VGIALVVGSLAFLLQLLIRFL) traverse the membrane as a helical segment.

This sequence belongs to the methylthiotransferase family. CDKAL1 subfamily. It depends on [4Fe-4S] cluster as a cofactor.

The protein resides in the membrane. It carries out the reaction N(6)-L-threonylcarbamoyladenosine(37) in tRNA + (sulfur carrier)-SH + AH2 + 2 S-adenosyl-L-methionine = 2-methylsulfanyl-N(6)-L-threonylcarbamoyladenosine(37) in tRNA + (sulfur carrier)-H + 5'-deoxyadenosine + L-methionine + A + S-adenosyl-L-homocysteine + 2 H(+). Its function is as follows. Catalyzes the methylthiolation of N6-threonylcarbamoyladenosine (t(6)A), leading to the formation of 2-methylthio-N6-threonylcarbamoyladenosine (ms(2)t(6)A) at position 37 in tRNAs that read codons beginning with adenine. The polypeptide is Threonylcarbamoyladenosine tRNA methylthiotransferase (Drosophila pseudoobscura pseudoobscura (Fruit fly)).